A 285-amino-acid polypeptide reads, in one-letter code: 1,4-dihydroxy-2-naphthoyl-CoA synthase (285 aa).

Substrate-binding positions include Arg-45, 84-88, Tyr-97, 129-133, Thr-155, Ser-161, Tyr-258, and Lys-273; these read SGGDQ and YAIGG. Residue 154 to 156 coordinates hydrogencarbonate; it reads QTG.

Belongs to the enoyl-CoA hydratase/isomerase family. MenB subfamily. It depends on hydrogencarbonate as a cofactor.

It carries out the reaction 2-succinylbenzoyl-CoA + H(+) = 1,4-dihydroxy-2-naphthoyl-CoA + H2O. It functions in the pathway quinol/quinone metabolism; 1,4-dihydroxy-2-naphthoate biosynthesis; 1,4-dihydroxy-2-naphthoate from chorismate: step 6/7. It participates in quinol/quinone metabolism; menaquinone biosynthesis. In terms of biological role, converts o-succinylbenzoyl-CoA (OSB-CoA) to 1,4-dihydroxy-2-naphthoyl-CoA (DHNA-CoA). The sequence is that of 1,4-dihydroxy-2-naphthoyl-CoA synthase from Haemophilus influenzae (strain ATCC 51907 / DSM 11121 / KW20 / Rd).